A 311-amino-acid chain; its full sequence is GTP cyclohydrolase MptA (311 aa).

This sequence belongs to the GTP cyclohydrolase IV family. Homodimer. Requires Fe(2+) as cofactor.

The catalysed reaction is GTP + H2O = 7,8-dihydroneopterin 2',3'-cyclic phosphate + formate + diphosphate + H(+). The protein operates within cofactor biosynthesis; 5,6,7,8-tetrahydromethanopterin biosynthesis. Functionally, converts GTP to 7,8-dihydro-D-neopterin 2',3'-cyclic phosphate, the first intermediate in the biosynthesis of coenzyme methanopterin. The chain is GTP cyclohydrolase MptA from Methanobrevibacter smithii (strain ATCC 35061 / DSM 861 / OCM 144 / PS).